We begin with the raw amino-acid sequence, 568 residues long: Mannitol 2-dehydrogenase (568 aa).

109–120 (IVHVGVGGFHRA) is an NAD(+) binding site.

The protein belongs to the mannitol dehydrogenase family. In terms of assembly, monomer.

It carries out the reaction D-mannitol + NAD(+) = D-fructose + NADH + H(+). Functionally, catalyzes the NAD(H)-dependent interconversion of D-fructose and D-mannitol in the mannitol metabolic pathway. The sequence is that of Mannitol 2-dehydrogenase from Phaeosphaeria nodorum (strain SN15 / ATCC MYA-4574 / FGSC 10173) (Glume blotch fungus).